The primary structure comprises 132 residues: Small ribosomal subunit protein uS8 (132 aa).

The protein belongs to the universal ribosomal protein uS8 family. In terms of assembly, part of the 30S ribosomal subunit. Contacts proteins S5 and S12.

Functionally, one of the primary rRNA binding proteins, it binds directly to 16S rRNA central domain where it helps coordinate assembly of the platform of the 30S subunit. The polypeptide is Small ribosomal subunit protein uS8 (Brucella ovis (strain ATCC 25840 / 63/290 / NCTC 10512)).